Here is a 1033-residue protein sequence, read N- to C-terminus: Calcium-transporting ATPase 12, plasma membrane-type (1033 aa).

The residue at position 1 (Met-1) is an N-acetylmethionine. Over 1–152 (MRDLKEYDYS…NTYHKPPPKG (152 aa)) the chain is Cytoplasmic. Residues 25–36 (QRRWRFAYAAIY) form an interaction with calmodulin region. Ser-37 bears the Phosphoserine mark. A helical transmembrane segment spans residues 153 to 173 (LLFFVYEAFKDLTILILLVCA). Residues 174–191 (IFSLGFGIKEHGIKEGWY) lie on the Lumenal side of the membrane. The helical transmembrane segment at 192-212 (EGGSIFVAVFLVIVVSALSNF) threads the bilayer. Topologically, residues 213–341 (RQERQFDKLS…SERTPLQVRL (129 aa)) are cytoplasmic. The helical transmembrane segment at 342–361 (DTLTSTIGKIGLTVAALVLV) threads the bilayer. Residues 362–397 (VLLVRYFTGNTEKEGKREYNGSKTPVDTVVNSVVRI) are Lumenal-facing. Residues 398-415 (VAAAVTIVVVAIPEGLPL) form a helical membrane-spanning segment. Topologically, residues 416 to 806 (AVTLTLAYSM…KWGRCVYNNI (391 aa)) are cytoplasmic. Asp-453 (4-aspartylphosphate intermediate) is an active-site residue. Mg(2+) contacts are provided by Asp-751 and Asp-755. The chain crosses the membrane as a helical span at residues 807–825 (QKFIQFQLTVNVAALVINF). Residues 826–836 (IAAISAGEVPL) are Lumenal-facing. The chain crosses the membrane as a helical span at residues 837 to 857 (TAVQLLWVNLIMDTLGALALA). The Cytoplasmic portion of the chain corresponds to 858-877 (TERPTNELLKRKPVGRTEAL). A helical transmembrane segment spans residues 878-900 (ITNVMWRNLLVQSLYQIAVLLIL). Residues 901–909 (QFKGMSIFS) are Lumenal-facing. Residues 910 to 930 (VRKEVKDTLIFNTFVLCQVFN) traverse the membrane as a helical segment. The Cytoplasmic segment spans residues 931-948 (EFNAREMEKKNVFKGLHR). A helical transmembrane segment spans residues 949-970 (NRLFIGIIAITIVLQVIMVEFL). The Lumenal segment spans residues 971 to 980 (KKFADTVRLN). Residues 981–1002 (GWQWGTCIALASLSWPIGFFTK) traverse the membrane as a helical segment. Over 1003–1006 (FIPV) the chain is Cytoplasmic.

It belongs to the cation transport ATPase (P-type) (TC 3.A.3) family. Type IIB subfamily.

Its subcellular location is the membrane. The catalysed reaction is Ca(2+)(in) + ATP + H2O = Ca(2+)(out) + ADP + phosphate + H(+). Its activity is regulated as follows. Activated by calmodulin. Functionally, this magnesium-dependent enzyme catalyzes the hydrolysis of ATP coupled with the translocation of calcium from the cytosol out of the cell or into organelles. The protein is Calcium-transporting ATPase 12, plasma membrane-type (ACA12) of Arabidopsis thaliana (Mouse-ear cress).